A 152-amino-acid polypeptide reads, in one-letter code: Large ribosomal subunit protein uL15 (152 aa).

A disordered region spans residues 1–54; the sequence is MGLKLNELSPGVGAKKTAHRKGRGIGSGLGKTGGRGVKGQKSRSGSGVRRGFEG. Gly residues predominate over residues 24–37; it reads GIGSGLGKTGGRGV.

Belongs to the universal ribosomal protein uL15 family. In terms of assembly, part of the 50S ribosomal subunit.

Its function is as follows. Binds to the 23S rRNA. In Psychrobacter sp. (strain PRwf-1), this protein is Large ribosomal subunit protein uL15.